A 259-amino-acid polypeptide reads, in one-letter code: Type III pantothenate kinase (259 aa).

Residue 6-13 (DVGNTNIV) participates in ATP binding. Substrate-binding positions include Tyr-100 and 107–110 (GADR). Asp-109 (proton acceptor) is an active-site residue. A K(+)-binding site is contributed by Asp-129. Position 132 (Thr-132) interacts with ATP. A substrate-binding site is contributed by Thr-184.

The protein belongs to the type III pantothenate kinase family. Homodimer. The cofactor is NH4(+). Requires K(+) as cofactor.

The protein resides in the cytoplasm. The catalysed reaction is (R)-pantothenate + ATP = (R)-4'-phosphopantothenate + ADP + H(+). The protein operates within cofactor biosynthesis; coenzyme A biosynthesis; CoA from (R)-pantothenate: step 1/5. Functionally, catalyzes the phosphorylation of pantothenate (Pan), the first step in CoA biosynthesis. The protein is Type III pantothenate kinase of Clostridium perfringens (strain 13 / Type A).